Reading from the N-terminus, the 141-residue chain is Early nodulin-like protein 19 (141 aa).

Positions 1–26 (MGRSMVLISAVVLAFLVAAPIPEVTA) are cleaved as a signal peptide. The 101-residue stretch at 27–127 (KKYLVGDKKF…GMKLDVLVET (101 aa)) folds into the Phytocyanin domain. 2 N-linked (GlcNAc...) asparagine glycosylation sites follow: N42 and N88. A disulfide bond links C80 and C115.

The protein belongs to the early nodulin-like (ENODL) family.

May act as a carbohydrate transporter. The sequence is that of Early nodulin-like protein 19 from Arabidopsis thaliana (Mouse-ear cress).